The sequence spans 338 residues: Ketol-acid reductoisomerase (NADP(+)) (338 aa).

Residues 1–181 (MKVYYDKDAD…GGTRGGVIET (181 aa)) enclose the KARI N-terminal Rossmann domain. Residues 24–27 (YGSQ), Arg-47, and Ser-52 contribute to the NADP(+) site. His-107 is a catalytic residue. NADP(+) is bound at residue Gly-133. The 146-residue stretch at 182-327 (TFKEETETDL…SRLRDMMPWI (146 aa)) folds into the KARI C-terminal knotted domain. Mg(2+) contacts are provided by Asp-190, Glu-194, Glu-226, and Glu-230. Residue Ser-251 participates in substrate binding.

The protein belongs to the ketol-acid reductoisomerase family. Mg(2+) is required as a cofactor.

It carries out the reaction (2R)-2,3-dihydroxy-3-methylbutanoate + NADP(+) = (2S)-2-acetolactate + NADPH + H(+). It catalyses the reaction (2R,3R)-2,3-dihydroxy-3-methylpentanoate + NADP(+) = (S)-2-ethyl-2-hydroxy-3-oxobutanoate + NADPH + H(+). The protein operates within amino-acid biosynthesis; L-isoleucine biosynthesis; L-isoleucine from 2-oxobutanoate: step 2/4. It participates in amino-acid biosynthesis; L-valine biosynthesis; L-valine from pyruvate: step 2/4. Involved in the biosynthesis of branched-chain amino acids (BCAA). Catalyzes an alkyl-migration followed by a ketol-acid reduction of (S)-2-acetolactate (S2AL) to yield (R)-2,3-dihydroxy-isovalerate. In the isomerase reaction, S2AL is rearranged via a Mg-dependent methyl migration to produce 3-hydroxy-3-methyl-2-ketobutyrate (HMKB). In the reductase reaction, this 2-ketoacid undergoes a metal-dependent reduction by NADPH to yield (R)-2,3-dihydroxy-isovalerate. This is Ketol-acid reductoisomerase (NADP(+)) from Nitrosomonas eutropha (strain DSM 101675 / C91 / Nm57).